We begin with the raw amino-acid sequence, 426 residues long: Zinc finger protein 662 (426 aa).

Residues Met1–Ala44 form the KRAB domain. 8 C2H2-type zinc fingers span residues Tyr192–His214, Tyr220–His242, Tyr248–His270, Phe276–His298, Tyr304–His326, Tyr332–His354, His360–His382, and Tyr388–His410.

The protein belongs to the krueppel C2H2-type zinc-finger protein family.

The protein localises to the nucleus. May be involved in transcriptional regulation. The polypeptide is Zinc finger protein 662 (ZNF662) (Homo sapiens (Human)).